The chain runs to 237 residues: Ribonuclease PH (237 aa).

Residues Arg86 and 124–126 (GTR) contribute to the phosphate site.

Belongs to the RNase PH family. Homohexameric ring arranged as a trimer of dimers.

The enzyme catalyses tRNA(n+1) + phosphate = tRNA(n) + a ribonucleoside 5'-diphosphate. In terms of biological role, phosphorolytic 3'-5' exoribonuclease that plays an important role in tRNA 3'-end maturation. Removes nucleotide residues following the 3'-CCA terminus of tRNAs; can also add nucleotides to the ends of RNA molecules by using nucleoside diphosphates as substrates, but this may not be physiologically important. Probably plays a role in initiation of 16S rRNA degradation (leading to ribosome degradation) during starvation. This Dinoroseobacter shibae (strain DSM 16493 / NCIMB 14021 / DFL 12) protein is Ribonuclease PH.